The following is a 256-amino-acid chain: Triosephosphate isomerase (256 aa).

12 to 14 serves as a coordination point for substrate; sequence NWK. Residue His99 is the Electrophile of the active site. Catalysis depends on Glu169, which acts as the Proton acceptor. Residues Gly175, Ser214, and 235 to 236 each bind substrate; that span reads GG.

The protein belongs to the triosephosphate isomerase family. Homodimer.

The protein resides in the cytoplasm. It catalyses the reaction D-glyceraldehyde 3-phosphate = dihydroxyacetone phosphate. Its pathway is carbohydrate biosynthesis; gluconeogenesis. It functions in the pathway carbohydrate degradation; glycolysis; D-glyceraldehyde 3-phosphate from glycerone phosphate: step 1/1. Involved in the gluconeogenesis. Catalyzes stereospecifically the conversion of dihydroxyacetone phosphate (DHAP) to D-glyceraldehyde-3-phosphate (G3P). This chain is Triosephosphate isomerase, found in Rhizobium meliloti (strain 1021) (Ensifer meliloti).